The chain runs to 193 residues: ATP-dependent Clp protease proteolytic subunit (193 aa).

Ser98 serves as the catalytic Nucleophile. His123 is an active-site residue.

This sequence belongs to the peptidase S14 family. In terms of assembly, fourteen ClpP subunits assemble into 2 heptameric rings which stack back to back to give a disk-like structure with a central cavity, resembling the structure of eukaryotic proteasomes.

It is found in the cytoplasm. It carries out the reaction Hydrolysis of proteins to small peptides in the presence of ATP and magnesium. alpha-casein is the usual test substrate. In the absence of ATP, only oligopeptides shorter than five residues are hydrolyzed (such as succinyl-Leu-Tyr-|-NHMec, and Leu-Tyr-Leu-|-Tyr-Trp, in which cleavage of the -Tyr-|-Leu- and -Tyr-|-Trp bonds also occurs).. Functionally, cleaves peptides in various proteins in a process that requires ATP hydrolysis. Has a chymotrypsin-like activity. Plays a major role in the degradation of misfolded proteins. In Haemophilus influenzae (strain PittEE), this protein is ATP-dependent Clp protease proteolytic subunit.